Here is a 614-residue protein sequence, read N- to C-terminus: Probable peptide-binding protein YejA (614 aa).

Positions 1-27 are cleaved as a signal peptide; the sequence is MILAPLKSRILIALAASALLIPAVASA.

It belongs to the bacterial solute-binding protein 5 family. In terms of assembly, the complex is composed of one ATP-binding protein (YejF), two transmembrane proteins (YejB and YejE) and a solute-binding protein (YejA).

The protein localises to the periplasm. Functionally, probably part of the ABC transporter complex YejABEF, which is likely involved in broad-spectrum peptide import. This is Probable peptide-binding protein YejA from Agrobacterium fabrum (strain C58 / ATCC 33970) (Agrobacterium tumefaciens (strain C58)).